A 263-amino-acid chain; its full sequence is Putative hydro-lyase BPUM_0381 (263 aa).

The protein belongs to the D-glutamate cyclase family.

The chain is Putative hydro-lyase BPUM_0381 from Bacillus pumilus (strain SAFR-032).